The chain runs to 78 residues: Sec-independent protein translocase protein TatA (78 aa).

Residues 1–21 (MGSLSIWHWIVVIGVVLLLFG) traverse the membrane as a helical segment. The segment covering 42-60 (GLQDDEKTAEKPEPVKSID) has biased composition (basic and acidic residues). The disordered stretch occupies residues 42 to 78 (GLQDDEKTAEKPEPVKSIDHTAPPAAAPRTDVGSKVV).

It belongs to the TatA/E family. The Tat system comprises two distinct complexes: a TatABC complex, containing multiple copies of TatA, TatB and TatC subunits, and a separate TatA complex, containing only TatA subunits. Substrates initially bind to the TatABC complex, which probably triggers association of the separate TatA complex to form the active translocon.

The protein resides in the cell inner membrane. Its function is as follows. Part of the twin-arginine translocation (Tat) system that transports large folded proteins containing a characteristic twin-arginine motif in their signal peptide across membranes. TatA could form the protein-conducting channel of the Tat system. The sequence is that of Sec-independent protein translocase protein TatA from Rhodopseudomonas palustris (strain BisB18).